Consider the following 255-residue polypeptide: Hydroxylmethylpyrimidine kinase (255 aa).

Pyridoxal 5'-phosphate contacts are provided by Gly-18, Gln-43, and Asn-110. Gln-43 provides a ligand contact to 4-amino-5-hydroxymethyl-2-methylpyrimidine. A disulfide bridge links Cys-195 with Cys-207. Ser-208 is a pyridoxal 5'-phosphate binding site.

It belongs to the ThiD family. Homodimer. Crystals show a disulfide bond between Cys-195 and Cys-207. This disulfide is possibly an artifact of the purification and crystallization conditions. However, as it is adjacent to the conserved GSGC of the oxyanion hole, this disulfide may help to orient the backbone amides toward the oxanion intermediate.

The catalysed reaction is 4-amino-5-hydroxymethyl-2-methylpyrimidine + ATP = 4-amino-2-methyl-5-(phosphooxymethyl)pyrimidine + ADP + H(+). It participates in cofactor biosynthesis; thiamine diphosphate biosynthesis. Inhibited by pyridoxal phosphate at high micromolar concentrations. In terms of biological role, catalyzes the phosphorylation of hydroxymethylpyrimidine (HMP) to hydroxymethylpyrimidine phosphate (HMP-P). Unlike other HMPKs, it cannot catalyze the phosphorylation of HMP-P to generate the diphosphate HMP-PP. Shows no activity with pyridoxal, pyridoxamine or pyridoxine. Does not show phosphatase activity. The chain is Hydroxylmethylpyrimidine kinase from Acinetobacter baumannii (strain IS-123).